The sequence spans 358 residues: Peptide chain release factor 1 (358 aa).

An N5-methylglutamine modification is found at glutamine 233.

It belongs to the prokaryotic/mitochondrial release factor family. In terms of processing, methylated by PrmC. Methylation increases the termination efficiency of RF1.

It localises to the cytoplasm. Peptide chain release factor 1 directs the termination of translation in response to the peptide chain termination codons UAG and UAA. The chain is Peptide chain release factor 1 from Staphylococcus haemolyticus (strain JCSC1435).